Here is a 31-residue protein sequence, read N- to C-terminus: Cyclotide mden-K (31 aa).

The segment at residues 1-31 is a cross-link (cyclopeptide (Gly-Asn)); the sequence is GSIPCGESCVWIPCISSVVGCACKNKVCYKN. Disulfide bonds link Cys-5-Cys-21, Cys-9-Cys-23, and Cys-14-Cys-28.

Belongs to the cyclotide family. Bracelet subfamily. This is a cyclic peptide.

Its function is as follows. Probably participates in a plant defense mechanism. This chain is Cyclotide mden-K, found in Melicytus dentatus (Tree violet).